The sequence spans 425 residues: Alpha-N-acetylgalactosaminidase (425 aa).

Residues 29–30, Glu-51, 99–102, 119–120, and Asn-148 each bind NAD(+); these read NR, WLTH, and EV. Tyr-177 is a substrate binding site. NAD(+)-binding positions include 194-198 and Tyr-211; that span reads FHNHW. Residues 211–214 and Tyr-293 each bind substrate; that span reads YPTH.

Belongs to the Gfo/Idh/MocA family. Glycosyl hydrolase 109 subfamily. The cofactor is NAD(+).

The catalysed reaction is Cleavage of non-reducing alpha-(1-&gt;3)-N-acetylgalactosamine residues from human blood group A and AB mucin glycoproteins, Forssman hapten and blood group A lacto series glycolipids.. Functionally, glycosidase that has specific alpha-N-acetylgalactosaminidase activity. This Bacteroides fragilis (strain ATCC 25285 / DSM 2151 / CCUG 4856 / JCM 11019 / LMG 10263 / NCTC 9343 / Onslow / VPI 2553 / EN-2) protein is Alpha-N-acetylgalactosaminidase.